Here is a 320-residue protein sequence, read N- to C-terminus: Ferrochelatase (320 aa).

Fe cation-binding residues include His194 and Glu275.

The protein belongs to the ferrochelatase family. Monomer.

Its subcellular location is the cytoplasm. It catalyses the reaction heme b + 2 H(+) = protoporphyrin IX + Fe(2+). It participates in porphyrin-containing compound metabolism; protoheme biosynthesis; protoheme from protoporphyrin-IX: step 1/1. Its function is as follows. Catalyzes the ferrous insertion into protoporphyrin IX. This chain is Ferrochelatase, found in Salmonella agona (strain SL483).